The following is a 301-amino-acid chain: MPIRIADNLPARRTLEAEGVIVMSETEAARQDIRPMRIALLNLMPDKITTETQIARLLGATPLQVDLELVRISDHVSKNTSAGHISAFYRPWDDVRAEKYDGLIVTGAPVETIPYEEVSYWDELRRIFDWSQSNVHRTLSVCWGAMAALYHFHGIEKHGLPTKASGVFRHVNHAPASPWMRGLPDVFDVPVSRWSEVRREDLPEGRGLSVLADSAETGLCLIDDPAMRTLHMFNHLEYDTLTLAGEYARDEGKYLPRNYFPGDDPQAMPANTWRGHGHLLYGNWINETYQTTPYDLADIGR.

Cys-142 serves as the catalytic Acyl-thioester intermediate. Substrate is bound by residues Lys-163 and Ser-192. His-235 functions as the Proton acceptor in the catalytic mechanism. Residue Glu-237 is part of the active site. Residue Arg-249 participates in substrate binding.

It belongs to the MetA family.

It localises to the cytoplasm. It catalyses the reaction L-homoserine + acetyl-CoA = O-acetyl-L-homoserine + CoA. Its pathway is amino-acid biosynthesis; L-methionine biosynthesis via de novo pathway; O-acetyl-L-homoserine from L-homoserine: step 1/1. Its function is as follows. Transfers an acetyl group from acetyl-CoA to L-homoserine, forming acetyl-L-homoserine. This chain is Homoserine O-acetyltransferase, found in Novosphingobium aromaticivorans (strain ATCC 700278 / DSM 12444 / CCUG 56034 / CIP 105152 / NBRC 16084 / F199).